Reading from the N-terminus, the 416-residue chain is F-box/FBD/LRR-repeat protein At1g13570 (416 aa).

Positions 5–53 (PDFISDLPQSIIENILTRLSIRDAIRTSVLSSKWRYKWSTLTDLVFDEK) constitute an F-box domain. 5 LRR repeats span residues 115 to 142 (VLKL…ELCH), 164 to 189 (QILV…SLSY), 203 to 229 (MYLY…SVSM), 238 to 263 (FEQS…VGYI), and 294 to 321 (CFED…KVSA). Positions 346–384 (LPSLESVKITDASGIRYELEFIRFLLGTSPVLETVTVSS) constitute an FBD domain.

This is F-box/FBD/LRR-repeat protein At1g13570 from Arabidopsis thaliana (Mouse-ear cress).